Reading from the N-terminus, the 433-residue chain is UPF0597 protein Spea_0809 (433 aa).

This sequence belongs to the UPF0597 family.

The sequence is that of UPF0597 protein Spea_0809 from Shewanella pealeana (strain ATCC 700345 / ANG-SQ1).